A 955-amino-acid chain; its full sequence is Kinesin-like protein NACK2 (955 aa).

In terms of domain architecture, Kinesin motor spans 36–357 (KILVTIRVRP…LCFATSAKEV (322 aa)). Residue 120–127 (GQTSSGKT) participates in ATP binding. Coiled-coil stretches lie at residues 366–443 (VVAE…LKGS) and 566–604 (KASL…VMHL).

The protein belongs to the TRAFAC class myosin-kinesin ATPase superfamily. Kinesin family. KIN-7 subfamily.

It is found in the cytoplasm. Its subcellular location is the nucleus. The protein localises to the cytoskeleton. The protein resides in the phragmoplast. In terms of biological role, probable plus end-directed motor protein that may function in the NACK-PQR (NPK1-NQK1/MEK1-NRK1) MAP kinase signaling pathway, which is essential for somatic cell cytokinesis, especially for the cell-plate formation and its expansion. May regulate the activity and the localization of NPK1, probably by association through the non-catalytic region of the kinase. The protein is Kinesin-like protein NACK2 (NACK2) of Nicotiana tabacum (Common tobacco).